Here is a 314-residue protein sequence, read N- to C-terminus: Olfactory receptor 10T2 (314 aa).

Over 1–26 the chain is Extracellular; the sequence is MRGFNKTTVVTQFILVGFSSLGELQL. Asn-5 carries N-linked (GlcNAc...) asparagine glycosylation. The helical transmembrane segment at 27 to 47 threads the bilayer; it reads LLFVIFLLLYLTILVANVTIM. Over 48-55 the chain is Cytoplasmic; sequence AVIRFSWT. A helical transmembrane segment spans residues 56-76; sequence LHTPMYGFLFILSFSESCYTF. Residues 77–100 lie on the Extracellular side of the membrane; it reads VIIPQLLVHLLSDTKTISFMACAT. A disulfide bridge links Cys-98 with Cys-190. A helical membrane pass occupies residues 101 to 121; sequence QLFFFLGFACTNCLLIAVMGY. At 122–140 the chain is on the cytoplasmic side; that stretch reads DRYVAICHPLRYTLIINKR. The chain crosses the membrane as a helical span at residues 141–161; it reads LGLELISLSGATGFFIALVAT. Residues 162–198 are Extracellular-facing; sequence NLICDMRFCGPNRVNHYFCDMAPVIKLACTDTHVKEL. Residues 199–218 form a helical membrane-spanning segment; the sequence is ALFSLSILVIMVPFLLILIS. The Cytoplasmic portion of the chain corresponds to 219-237; sequence YGFIVNTILKIPSAEGKKA. The chain crosses the membrane as a helical span at residues 238 to 258; that stretch reads FVTCASHLTVVFVHYGCASII. Topologically, residues 259–271 are extracellular; the sequence is YLRPKSKSASDKD. Residues 272–292 form a helical membrane-spanning segment; it reads QLVAVTYTVVTPLLNPLVYSL. At 293–314 the chain is on the cytoplasmic side; it reads RNKEVKTALKRVLGMPVATKMS.

Belongs to the G-protein coupled receptor 1 family.

It localises to the cell membrane. Odorant receptor. The sequence is that of Olfactory receptor 10T2 (OR10T2) from Homo sapiens (Human).